The sequence spans 328 residues: Beta-agarase C (328 aa).

The first 17 residues, 1-17, serve as a signal peptide directing secretion; sequence MNLTKMAVFAASLFCLA. A propeptide spanning residues 18–67 is cleaved from the precursor; it reads CKNDIDTELEKKSIPESEIQKSEEKLPNEEELTPTDPDEETNKEETVTAN. Positions 26 to 45 are enriched in basic and acidic residues; that stretch reads LEKKSIPESEIQKSEEKLPN. Residues 26–61 are disordered; the sequence is LEKKSIPESEIQKSEEKLPNEEELTPTDPDEETNKE. Over residues 46 to 59 the composition is skewed to acidic residues; the sequence is EEELTPTDPDEETN. The GH16 domain maps to 70–328; the sequence is YDFTGNTPPP…WIHTYQLVEE (259 aa). Residues tryptophan 110, 119 to 129, 133 to 135, glutamate 188, glutamate 193, and arginine 224 contribute to the substrate site; these read KAENSGVSDGK and KAT. The active-site Nucleophile is the glutamate 188. The active-site Proton donor is the glutamate 193.

It belongs to the glycosyl hydrolase 16 family.

The protein resides in the secreted. It carries out the reaction Hydrolysis of (1-&gt;4)-beta-D-galactosidic linkages in agarose, giving the tetramer as the predominant product.. Its function is as follows. Cleaves the beta-1,4-linkages between beta-D-galactose and alpha-L-3,6-anhydro-galactose residues in agarose. Cleaves agarose in a random manner with retention of the anomeric-bond configuration, producing beta-anomers that give rise progressively to alpha-anomers when mutarotation takes place. The protein is Beta-agarase C (agaC) of Zobellia galactanivorans (strain DSM 12802 / CCUG 47099 / CIP 106680 / NCIMB 13871 / Dsij).